The chain runs to 95 residues: UPF0381 protein HI_0400 (95 aa).

It belongs to the UPF0381 family.

The protein is UPF0381 protein HI_0400 of Haemophilus influenzae (strain ATCC 51907 / DSM 11121 / KW20 / Rd).